Here is a 123-residue protein sequence, read N- to C-terminus: Small ribosomal subunit protein uS13 (123 aa).

Positions 95 to 123 (GLPVRGQRTKTNARTRKGPIKTVGAKRKK) are disordered.

The protein belongs to the universal ribosomal protein uS13 family. As to quaternary structure, part of the 30S ribosomal subunit. Forms a loose heterodimer with protein S19. Forms two bridges to the 50S subunit in the 70S ribosome.

Its function is as follows. Located at the top of the head of the 30S subunit, it contacts several helices of the 16S rRNA. In the 70S ribosome it contacts the 23S rRNA (bridge B1a) and protein L5 of the 50S subunit (bridge B1b), connecting the 2 subunits; these bridges are implicated in subunit movement. Contacts the tRNAs in the A and P-sites. The chain is Small ribosomal subunit protein uS13 from Desulfitobacterium hafniense (strain DSM 10664 / DCB-2).